A 223-amino-acid polypeptide reads, in one-letter code: TMF-regulated nuclear protein 1 (223 aa).

Disordered regions lie at residues 1–84 (MPGC…GPAG) and 196–223 (GRLR…SPQR). The span at 21-54 (GSPPPPPREPLPSLQPPSPSPTSTPTPTKSPPLP) shows a compositional bias: pro residues. Residues 73–84 (ASGGSGGAGPAG) show a composition bias toward gly residues.

In terms of assembly, interacts with TMF1; may regulate TRNP1 proteasomal degradation. Ubiquitinated, leading to its degradation by the proteasome. Expressed in brain and kidney (at protein level). Also detected in spleen and intestine.

The protein resides in the nucleus. Functionally, DNA-binding factor that regulates the expression of a subset of genes and plays a key role in tangential, radial, and lateral expansion of the brain neocortex. Regulates neural stem cells proliferation and the production of intermediate neural progenitors and basal radial glial cells affecting the process of cerebral cortex gyrification. May control the proliferation rate of cells by regulating their progression through key cell-cycle transition points. The sequence is that of TMF-regulated nuclear protein 1 (Trnp1) from Mus musculus (Mouse).